The primary structure comprises 548 residues: GLC7-interacting protein 2 (548 aa).

Over residues Met-1–Lys-23 the composition is skewed to basic and acidic residues. Disordered regions lie at residues Met-1–Glu-54 and Val-118–Pro-143. The residue at position 51 (Ser-51) is a Phosphoserine. Thr-52 carries the phosphothreonine modification. Position 155 is a phosphoserine (Ser-155). The tract at residues Arg-191–Gly-212 is disordered. Phosphoserine occurs at positions 221 and 238. The segment at Phe-293–Glu-346 is disordered. The CBM21 domain maps to His-419–Asp-534.

As to quaternary structure, interacts with phosphatase 1 (GLC7).

This Saccharomyces cerevisiae (strain ATCC 204508 / S288c) (Baker's yeast) protein is GLC7-interacting protein 2 (GIP2).